Consider the following 502-residue polypeptide: Ubiquitin-associated protein 1 (502 aa).

The interaction with ESCRT-I stretch occupies residues methionine 1–glycine 95. The UMA domain maps to leucine 17–isoleucine 63. A compositionally biased stretch (basic and acidic residues) spans alanine 86–serine 100. Residues alanine 86–isoleucine 117 are disordered. The span at methionine 102–threonine 112 shows a compositional bias: polar residues. Phosphoserine occurs at positions 146, 205, and 289. An interaction with PTPN23 region spans residues valine 260 to threonine 290. UBA domains are found at residues serine 389–histidine 430 and glutamine 451–arginine 498.

In terms of assembly, component of an ESCRT-I complex (endosomal sorting complex required for transport I) which consists of TSG101, VPS28, VPS37A and UBAP1 in a 1:1:1:1 stoichiometry. Interacts with PTPN23. Interacts (via UBA domains) with ubiquitinated proteins. As to expression, ubiquitous. Highly expressed in heart, brain, placenta, lung, liver, skeletal muscle and pancreas.

The protein localises to the cytoplasm. It localises to the cytosol. Its subcellular location is the endosome. In terms of biological role, component of the ESCRT-I complex, a regulator of vesicular trafficking process. Binds to ubiquitinated cargo proteins and is required for the sorting of endocytic ubiquitinated cargos into multivesicular bodies (MVBs). Plays a role in the proteasomal degradation of ubiquitinated cell-surface proteins, such as EGFR and BST2. This is Ubiquitin-associated protein 1 from Homo sapiens (Human).